A 617-amino-acid chain; its full sequence is Proline--tRNA ligase (617 aa).

The protein belongs to the class-II aminoacyl-tRNA synthetase family. ProS type 1 subfamily. As to quaternary structure, homodimer.

The protein localises to the cytoplasm. It carries out the reaction tRNA(Pro) + L-proline + ATP = L-prolyl-tRNA(Pro) + AMP + diphosphate. Functionally, catalyzes the attachment of proline to tRNA(Pro) in a two-step reaction: proline is first activated by ATP to form Pro-AMP and then transferred to the acceptor end of tRNA(Pro). As ProRS can inadvertently accommodate and process non-cognate amino acids such as alanine and cysteine, to avoid such errors it has two additional distinct editing activities against alanine. One activity is designated as 'pretransfer' editing and involves the tRNA(Pro)-independent hydrolysis of activated Ala-AMP. The other activity is designated 'posttransfer' editing and involves deacylation of mischarged Ala-tRNA(Pro). The misacylated Cys-tRNA(Pro) is not edited by ProRS. The chain is Proline--tRNA ligase from Streptococcus pneumoniae (strain 70585).